Here is a 306-residue protein sequence, read N- to C-terminus: Putative lipid kinase Sca_1050 (306 aa).

Residues 3 to 139 (QHFHRGILFY…FDVLKVNDTY (137 aa)) enclose the DAGKc domain. ATP is bound by residues serine 44, 74–80 (GDGTVNE), and threonine 101. Residues serine 220, aspartate 223, and glutamate 225 each coordinate Mg(2+). The Proton acceptor role is filled by glutamate 281.

The protein belongs to the diacylglycerol/lipid kinase family. Mg(2+) serves as cofactor.

Functionally, may catalyze the ATP-dependent phosphorylation of lipids other than diacylglycerol (DAG). This Staphylococcus carnosus (strain TM300) protein is Putative lipid kinase Sca_1050.